The following is a 669-amino-acid chain: MVQKFQSPVRVYKYPFELVMKAYERRFPKCPQMPIVLDCDVIKIESLENGAKTNTTRRCKLAVDAPYIFKKLIGVDFVYFLQHNYLDMSNRTLSIEAVNESFSSRIEIFERCRYYAHPDNAEWTCFDQTATLDIKNFFGFEHSMEKMGMKQYTQTTLKGKEIIEYFINQLEQEGVTHVDRWVPPLDAAKSPTPEQKQHHDILLDGDFIARNLGQLSPMQESKLLELRKMLDGVDDLERVPSYQTILRFLSARDWHVSQAFAMLCDSLQWRKEHRMDSLLEEYTEPAVVVEHFPGGWHHHDKDGRPIYILRLGHMDVKGLLKSLGMEGLLRLALHICEEGIQKINESAERLDKPVLNWSLLVDLEGLSMRHLWRPGIKALLYIIETVERNYPETMGRVLVVRAPRVFPIAWTIVSAFIDEHTRSKFLFYGPDCEHMKDGLAQYIDEEIVPDFLGGPCKTMIHEGGLVPKTLYKANSLEDHDDDVTIVSPGAGAATATASAEASLAPVALAPMKRLSANHQHDHQNLYKSVDLKPGFSHELLIRNEDPKSVLTWDFDVMRNDLHFTLYRVTQELPEKNDDAVSYFDLQDFVEGTNYFREEPTLICRHKESVQGSHVMHHNDSYLMHWFSPSGAQLNLFYEVLSSVNYKGSMTSLQSAFSSNSSAASSVQSR.

Positions 3-175 constitute a PRELI/MSF1 domain; it reads QKFQSPVRVY…FINQLEQEGV (173 aa). One can recognise a CRAL-TRIO domain in the interval 284–460; it reads EPAVVVEHFP…FLGGPCKTMI (177 aa). The region spanning 522–641 is the GOLD domain; the sequence is HQNLYKSVDL…QLNLFYEVLS (120 aa).

The protein resides in the mitochondrion. This Drosophila pseudoobscura pseudoobscura (Fruit fly) protein is Protein real-time.